Consider the following 360-residue polypeptide: Hyaluronan and proteoglycan link protein 3 (360 aa).

A signal peptide spans 1-17; the sequence is MGLLLLVPLLLLPGSYG. Residues 48–164 enclose the Ig-like V-type domain; it reads KLVVETPEET…ESGLVELELR (117 aa). 5 disulfides stabilise this stretch: Cys-70–Cys-146, Cys-188–Cys-259, Cys-212–Cys-233, Cys-286–Cys-356, and Cys-311–Cys-332. Link domains follow at residues 166-261 and 266-358; these read VVFP…FCFA and GRVY…YCYR.

The protein belongs to the HAPLN family. As to expression, widely expressed with highest levels in spleen and placenta.

The protein resides in the secreted. It localises to the extracellular space. It is found in the extracellular matrix. Functionally, may function in hyaluronic acid binding. In Homo sapiens (Human), this protein is Hyaluronan and proteoglycan link protein 3 (HAPLN3).